The chain runs to 339 residues: Pleckstrin homology domain protein opy1 (339 aa).

The 95-residue stretch at 25–119 folds into the PH 1 domain; it reads RVLKSGWLIK…WVHVLRSTTG (95 aa). Positions 141–167 are enriched in polar residues; the sequence is ESEPNVQISDTDFDNISTEPRNQTTSP. Positions 141-170 are disordered; sequence ESEPNVQISDTDFDNISTEPRNQTTSPLDL. Residues 233-330 enclose the PH 2 domain; that stretch reads KVLMQGTIHW…WVAALKTSID (98 aa).

Interacts (via domain PH 1) with phosphatidylinositol 4-phosphate 5-kinase its3; the interaction is direct but opy1 does not appear to regulate its3 localization or function.

It localises to the cell tip. Its subcellular location is the cell membrane. Binds phosphatidylinositol 4,5-bisphosphate (PtdIns(4,5)P2/PIP2) at the cell membrane. In Schizosaccharomyces pombe (strain 972 / ATCC 24843) (Fission yeast), this protein is Pleckstrin homology domain protein opy1.